The following is a 220-amino-acid chain: Mediator of RNA polymerase II transcription subunit 19 (220 aa).

The disordered stretch occupies residues 171–220 (AFDLDGTGKSQSGSNSGNNSKKRKNKSSGSSMATPTHSDSHEDMKRRRLE). The segment covering 178 to 189 (GKSQSGSNSGNN) has biased composition (low complexity). The segment covering 208-220 (SDSHEDMKRRRLE) has biased composition (basic and acidic residues).

This sequence belongs to the Mediator complex subunit 19 family. Component of the Mediator complex, which is composed of at least 21 subunits that form three structurally distinct submodules. The Mediator head module contains MED6, MED8, MED11, SRB4/MED17, SRB5/MED18, ROX3/MED19, SRB2/MED20 and SRB6/MED22, the middle module contains MED1, MED4, NUT1/MED5, MED7, CSE2/MED9, NUT2/MED10, SRB7/MED21 and SOH1/MED31, and the tail module contains MED2, PGD1/MED3, RGR1/MED14, GAL11/MED15 and SIN4/MED16. The head and the middle modules interact directly with RNA polymerase II, whereas the elongated tail module interacts with gene-specific regulatory proteins.

It is found in the nucleus. Component of the Mediator complex, a coactivator involved in the regulated transcription of nearly all RNA polymerase II-dependent genes. Mediator functions as a bridge to convey information from gene-specific regulatory proteins to the basal RNA polymerase II transcription machinery. The Mediator complex, having a compact conformation in its free form, is recruited to promoters by direct interactions with regulatory proteins and serves for the assembly of a functional preinitiation complex with RNA polymerase II and the general transcription factors. The Mediator complex unfolds to an extended conformation and partially surrounds RNA polymerase II, specifically interacting with the unphosphorylated form of the C-terminal domain (CTD) of RNA polymerase II. The Mediator complex dissociates from the RNA polymerase II holoenzyme and stays at the promoter when transcriptional elongation begins. The chain is Mediator of RNA polymerase II transcription subunit 19 (ROX3) from Saccharomyces cerevisiae (strain ATCC 204508 / S288c) (Baker's yeast).